The sequence spans 507 residues: Cytochrome P450 monooxygenase cloA (507 aa).

The helical transmembrane segment at 15-35 (WTWILLTTCIALTSPLVLKGI) threads the bilayer. The N-linked (GlcNAc...) asparagine glycan is linked to asparagine 247. A heme-binding site is contributed by cysteine 450.

It belongs to the cytochrome P450 family. Heme serves as cofactor.

It is found in the membrane. The protein operates within alkaloid biosynthesis; ergot alkaloid biosynthesis. Its function is as follows. Cytochrome P450 monooxygenase; part of the gene cluster that mediates the biosynthesis of fungal ergot alkaloid. DmaW catalyzes the first step of ergot alkaloid biosynthesis by condensing dimethylallyl diphosphate (DMAP) and tryptophan to form 4-dimethylallyl-L-tryptophan. The second step is catalyzed by the methyltransferase easF that methylates 4-dimethylallyl-L-tryptophan in the presence of S-adenosyl-L-methionine, resulting in the formation of 4-dimethylallyl-L-abrine. The catalase easC and the FAD-dependent oxidoreductase easE then transform 4-dimethylallyl-L-abrine to chanoclavine-I which is further oxidized by easD in the presence of NAD(+), resulting in the formation of chanoclavine-I aldehyde. Agroclavine dehydrogenase easG then mediates the conversion of chanoclavine-I aldehyde to agroclavine via a non-enzymatic adduct reaction: the substrate is an iminium intermediate that is formed spontaneously from chanoclavine-I aldehyde in the presence of glutathione. The presence of easA is not required to complete this reaction. Further conversion of agroclavine to paspalic acid is a two-step process involving oxidation of agroclavine to elymoclavine and of elymoclavine to paspalic acid, the second step being performed by the elymoclavine oxidase cloA. Paspalic acid is then further converted to D-lysergic acid. Ergopeptines are assembled from D-lysergic acid and three different amino acids by the D-lysergyl-peptide-synthetases composed each of a monomudular and a trimodular nonribosomal peptide synthetase subunit. LpsB and lpsC encode the monomodular subunits responsible for D-lysergic acid activation and incorporation into the ergopeptine backbone. LpsA1 and A2 subunits encode the trimodular nonribosomal peptide synthetase assembling the tripeptide portion of ergopeptines. LpsA1 is responsible for formation of the major ergopeptine, ergotamine, and lpsA2 for alpha-ergocryptine, the minor ergopeptine of the total alkaloid mixture elaborated by C.purpurea. D-lysergyl-tripeptides are assembled by the nonribosomal peptide synthetases and released as N-(D-lysergyl-aminoacyl)-lactams. Cyclolization of the D-lysergyl-tripeptides is performed by the Fe(2+)/2-ketoglutarate-dependent dioxygenase easH which introduces a hydroxyl group into N-(D-lysergyl-aminoacyl)-lactam at alpha-C of the aminoacyl residue followed by spontaneous condensation with the terminal lactam carbonyl group. This is Cytochrome P450 monooxygenase cloA from Claviceps purpurea (Ergot fungus).